The following is a 288-amino-acid chain: Shikimate dehydrogenase (NADP(+)) (288 aa).

Shikimate is bound by residues S14–S16 and T63. Residue K67 is the Proton acceptor of the active site. Residue E79 coordinates NADP(+). Shikimate-binding residues include N88 and D103. NADP(+) contacts are provided by residues G127–A131, N151–K156, and M219. Y221 contributes to the shikimate binding site. G242 provides a ligand contact to NADP(+).

It belongs to the shikimate dehydrogenase family. In terms of assembly, homodimer.

The catalysed reaction is shikimate + NADP(+) = 3-dehydroshikimate + NADPH + H(+). It participates in metabolic intermediate biosynthesis; chorismate biosynthesis; chorismate from D-erythrose 4-phosphate and phosphoenolpyruvate: step 4/7. Functionally, involved in the biosynthesis of the chorismate, which leads to the biosynthesis of aromatic amino acids. Catalyzes the reversible NADPH linked reduction of 3-dehydroshikimate (DHSA) to yield shikimate (SA). The polypeptide is Shikimate dehydrogenase (NADP(+)) (Caldicellulosiruptor bescii (strain ATCC BAA-1888 / DSM 6725 / KCTC 15123 / Z-1320) (Anaerocellum thermophilum)).